The sequence spans 167 residues: NAD(P)H-quinone oxidoreductase subunit I, chloroplastic (167 aa).

2 consecutive 4Fe-4S ferredoxin-type domains span residues 55-84 (GRIH…VDWK) and 95-124 (LNYS…MTEE). Residues cysteine 64, cysteine 67, cysteine 70, cysteine 74, cysteine 104, cysteine 107, cysteine 110, and cysteine 114 each contribute to the [4Fe-4S] cluster site.

It belongs to the complex I 23 kDa subunit family. As to quaternary structure, NDH is composed of at least 16 different subunits, 5 of which are encoded in the nucleus. It depends on [4Fe-4S] cluster as a cofactor.

The protein localises to the plastid. Its subcellular location is the chloroplast thylakoid membrane. The enzyme catalyses a plastoquinone + NADH + (n+1) H(+)(in) = a plastoquinol + NAD(+) + n H(+)(out). It catalyses the reaction a plastoquinone + NADPH + (n+1) H(+)(in) = a plastoquinol + NADP(+) + n H(+)(out). In terms of biological role, NDH shuttles electrons from NAD(P)H:plastoquinone, via FMN and iron-sulfur (Fe-S) centers, to quinones in the photosynthetic chain and possibly in a chloroplast respiratory chain. The immediate electron acceptor for the enzyme in this species is believed to be plastoquinone. Couples the redox reaction to proton translocation, and thus conserves the redox energy in a proton gradient. In Morus indica (Mulberry), this protein is NAD(P)H-quinone oxidoreductase subunit I, chloroplastic.